A 489-amino-acid chain; its full sequence is MIKLFNTLSKRVEVFKPIDDVVKIYCCGVTVYDLCHLGHARSYIVWDILRRFLIYSDFKVKYVQNFTDIDDKILKRAKEESSSMKEVSEKNIIEFHKDMDSLGIMRPDSMPKATNHICNICSFITILEDKGYAYSRDGDVYYSVFKNKNYGKLSNQNIQEQNINQQGRMANDENSKKLNPQDFALWKKAKDDEPFFDSPWGKGRPGWHIECSAMVKDELGDTIDIHLGGSDLIFPHHENEIAQSEAANGKKLANYWLHNGMVNVNGQKMSKSLKNFTTIRELIKSGISPMSLRYFVMTVNYRKPLDFTEEALRSASEAWKNINIALSFMDLTKGAFRYIDKNESIEEEYKEKISFELSQKKLKFSEALGNDLNTAGAIAIIYDLAKPLKNFLNQFQRVEGFKIDLNEKFFLIENFKTLEKLTKVLGLEKEVLVKESKITEEEISSLINERLKAKKGKNYAKADEIRNLLNEKGIELIDQSKEITTWIRL.

Residue Cys27 coordinates Zn(2+). A 'HIGH' region motif is present at residues 29–39; that stretch reads VTVYDLCHLGH. The Zn(2+) site is built by Cys211, His236, and Glu240. Residues 268–272 carry the 'KMSKS' region motif; that stretch reads KMSKS. Lys271 is a binding site for ATP.

The protein belongs to the class-I aminoacyl-tRNA synthetase family. Monomer. It depends on Zn(2+) as a cofactor.

It localises to the cytoplasm. It catalyses the reaction tRNA(Cys) + L-cysteine + ATP = L-cysteinyl-tRNA(Cys) + AMP + diphosphate. The chain is Cysteine--tRNA ligase from Prochlorococcus marinus (strain MIT 9215).